The chain runs to 1325 residues: uncharacterized protein (1325 aa).

An N-terminal signal peptide occupies residues 1–27 (MHTFTRKVKWPFMFTAIGLTFGIVAVA). The N-palmitoyl cysteine moiety is linked to residue C28. C28 carries the S-diacylglycerol cysteine lipid modification. Disordered stretches follow at residues 379–402 (RAAS…GTTQ) and 430–464 (NTNA…TGNS). Residues 436–448 (TGGGGSGGGGGTS) are compositionally biased toward gly residues. Low complexity predominate over residues 449–464 (TGSSTGSSTETTTGNS).

The protein belongs to the MG307/MG309/MG338 family.

Its subcellular location is the cell membrane. This is an uncharacterized protein from Mycoplasma pneumoniae (strain ATCC 29342 / M129 / Subtype 1) (Mycoplasmoides pneumoniae).